Reading from the N-terminus, the 400-residue chain is Large envelope protein (400 aa).

M1 is subject to N-acetylmethionine. Disordered stretches follow at residues 1 to 64, 85 to 118, and 143 to 174; these read MGGW…GAFG, LTTV…SHPQ, and PGGS…PAPN. Residue G2 is the site of N-myristoyl glycine; by host attachment. Residues 2–119 are pre-S1; it reads GGWSSKPRQG…PPLRDSHPQA (118 aa). The pre-S stretch occupies residues 2-174; it reads GGWSSKPRQG…SSRTGDPAPN (173 aa). Topologically, residues 2-181 are virion surface; in external conformation; sequence GGWSSKPRQG…APNMESTTSG (180 aa). Residues 2–253 lie on the Intravirion; in internal conformation side of the membrane; the sequence is GGWSSKPRQG…PGYRWMCLRR (252 aa). An N-linked (GlcNAc...) asparagine glycan is attached at W4. The span at 96-106 shows a compositional bias: polar residues; that stretch reads STNRQSGRQPT. The pre-S2 stretch occupies residues 120 to 174; it reads MQWNSTTFHQVLLDPRVRGLYFPPGGSSSGTVNPVPTTASPISSISSRTGDPAPN. Residues 155–166 show a composition bias toward low complexity; sequence PTTASPISSISS. The chain crosses the membrane as a helical span at residues 182–202; sequence FLGPLLVLQAGFFLLTRILTI. Residues 203 to 253 lie on the Intravirion; in external conformation side of the membrane; sequence PQSLDSWWTSLNFLGGAPTCPGQNSQSPTSNHSPTSCPPICPGYRWMCLRR. Residues 254–274 form a helical membrane-spanning segment; that stretch reads FIIFLFILLLCLIFLLVLLDY. At 275 to 348 the chain is on the virion surface side; that stretch reads QGMLPVCPLL…GASVRFSWLS (74 aa). Residue N320 is glycosylated (N-linked (GlcNAc...) asparagine; by host). Residues 349–369 form a helical membrane-spanning segment; the sequence is LLVPFVQWFVGLSPTVWLSVI. Topologically, residues 370–375 are intravirion; that stretch reads WMMWYW. The chain crosses the membrane as a helical span at residues 376 to 398; it reads GPSLYNILSPFLPLLPIFFCLWV. At 399–400 the chain is on the virion surface side; that stretch reads YI.

This sequence belongs to the orthohepadnavirus major surface antigen family. In terms of assembly, in its internal form (Li-HBsAg), interacts with the capsid protein and with the isoform S. Interacts with host chaperone CANX. As to quaternary structure, associates with host chaperone CANX through its pre-S2 N glycan; this association may be essential for isoform M proper secretion. Interacts with isoform L. Interacts with the antigens of satellite virus HDV (HDVAgs); this interaction is required for encapsidation of HDV genomic RNA. Isoform M is N-terminally acetylated by host at a ratio of 90%, and N-glycosylated by host at the pre-S2 region. Post-translationally, myristoylated.

The protein resides in the virion membrane. In terms of biological role, the large envelope protein exists in two topological conformations, one which is termed 'external' or Le-HBsAg and the other 'internal' or Li-HBsAg. In its external conformation the protein attaches the virus to cell receptors and thereby initiating infection. This interaction determines the species specificity and liver tropism. This attachment induces virion internalization predominantly through caveolin-mediated endocytosis. The large envelope protein also assures fusion between virion membrane and endosomal membrane. In its internal conformation the protein plays a role in virion morphogenesis and mediates the contact with the nucleocapsid like a matrix protein. The middle envelope protein plays an important role in the budding of the virion. It is involved in the induction of budding in a nucleocapsid independent way. In this process the majority of envelope proteins bud to form subviral lipoprotein particles of 22 nm of diameter that do not contain a nucleocapsid. The chain is Large envelope protein from Homo sapiens (Human).